Reading from the N-terminus, the 162-residue chain is NADH-quinone oxidoreductase subunit I (162 aa).

4Fe-4S ferredoxin-type domains follow at residues L52–G82 and T93–N122. Residues C62, C65, C68, C72, C102, C105, C108, and C112 each coordinate [4Fe-4S] cluster.

The protein belongs to the complex I 23 kDa subunit family. NDH-1 is composed of 14 different subunits. Subunits NuoA, H, J, K, L, M, N constitute the membrane sector of the complex. It depends on [4Fe-4S] cluster as a cofactor.

It localises to the cell inner membrane. It carries out the reaction a quinone + NADH + 5 H(+)(in) = a quinol + NAD(+) + 4 H(+)(out). Its function is as follows. NDH-1 shuttles electrons from NADH, via FMN and iron-sulfur (Fe-S) centers, to quinones in the respiratory chain. The immediate electron acceptor for the enzyme in this species is believed to be ubiquinone. Couples the redox reaction to proton translocation (for every two electrons transferred, four hydrogen ions are translocated across the cytoplasmic membrane), and thus conserves the redox energy in a proton gradient. This Azorhizobium caulinodans (strain ATCC 43989 / DSM 5975 / JCM 20966 / LMG 6465 / NBRC 14845 / NCIMB 13405 / ORS 571) protein is NADH-quinone oxidoreductase subunit I.